A 398-amino-acid chain; its full sequence is MATTLATDVRLSIAHQTRFGFRLASTISSNPESTANNVAFSPVSLHVALSLITAGAGGATRDQLVATLGEGEAERLHALAEQVVQFVLADASYADSPRVTFANGVFVDASLPLKPSFQELAVCKYKAEAQSVDFQTKAAEVTAQVNSWVEKVTTGLIKDILPAGSISNTTRLVLGNALYFKGAWTDQFDSRVTKSDYFYLLDGSSIQTPFMYSSEEQYISSSDGLKVLKLPYKQGGDKRQFSMYILLPEAPSGIWSLAEKLSAEPELLERHIPRQKVALRQFKLPKFKISFGIEASDLLKHLGLQLPFSDEADLSEMVDSPMPQGLRISSVFHKTFVEVNETGTEAAAATIAKAVLLSASPPSDMDFIADHPFLFLIREDTSGVVLFIGHVVNPLRSL.

Residues 343-367 (GTEAAAATIAKAVLLSASPPSDMDF) form an RCL region.

This sequence belongs to the serpin family.

Inhibits chymotrypsin and cathepsin G in vitro. In Triticum aestivum (Wheat), this protein is Serpin-Z2A.